The chain runs to 391 residues: Succinyl-diaminopimelate desuccinylase (391 aa).

Histidine 78 is a binding site for Zn(2+). Aspartate 80 is an active-site residue. Aspartate 111 provides a ligand contact to Zn(2+). Glutamate 145 (proton acceptor) is an active-site residue. Zn(2+) is bound by residues glutamate 146, glutamate 174, and histidine 360.

Belongs to the peptidase M20A family. DapE subfamily. As to quaternary structure, homodimer. Zn(2+) is required as a cofactor. Co(2+) serves as cofactor.

It carries out the reaction N-succinyl-(2S,6S)-2,6-diaminopimelate + H2O = (2S,6S)-2,6-diaminopimelate + succinate. It functions in the pathway amino-acid biosynthesis; L-lysine biosynthesis via DAP pathway; LL-2,6-diaminopimelate from (S)-tetrahydrodipicolinate (succinylase route): step 3/3. Functionally, catalyzes the hydrolysis of N-succinyl-L,L-diaminopimelic acid (SDAP), forming succinate and LL-2,6-diaminopimelate (DAP), an intermediate involved in the bacterial biosynthesis of lysine and meso-diaminopimelic acid, an essential component of bacterial cell walls. The protein is Succinyl-diaminopimelate desuccinylase of Acidovorax ebreus (strain TPSY) (Diaphorobacter sp. (strain TPSY)).